The sequence spans 349 residues: Anthranilate phosphoribosyltransferase (349 aa).

Residues G82, 85–86, 92–95, 110–118, and S122 contribute to the 5-phospho-alpha-D-ribose 1-diphosphate site; these read GD, NVST, and KHGNRAVSG. G82 lines the anthranilate pocket. S94 contributes to the Mg(2+) binding site. N113 serves as a coordination point for anthranilate. R168 lines the anthranilate pocket. The Mg(2+) site is built by D227 and E228.

The protein belongs to the anthranilate phosphoribosyltransferase family. As to quaternary structure, homodimer. It depends on Mg(2+) as a cofactor.

The catalysed reaction is N-(5-phospho-beta-D-ribosyl)anthranilate + diphosphate = 5-phospho-alpha-D-ribose 1-diphosphate + anthranilate. It functions in the pathway amino-acid biosynthesis; L-tryptophan biosynthesis; L-tryptophan from chorismate: step 2/5. Functionally, catalyzes the transfer of the phosphoribosyl group of 5-phosphorylribose-1-pyrophosphate (PRPP) to anthranilate to yield N-(5'-phosphoribosyl)-anthranilate (PRA). This chain is Anthranilate phosphoribosyltransferase, found in Pseudomonas putida (strain ATCC 700007 / DSM 6899 / JCM 31910 / BCRC 17059 / LMG 24140 / F1).